We begin with the raw amino-acid sequence, 991 residues long: KAT8 regulatory NSL complex subunit 1-like protein (991 aa).

K136 is covalently cross-linked (Glycyl lysine isopeptide (Lys-Gly) (interchain with G-Cter in SUMO2)). Positions 443–462 are disordered; the sequence is VNSQVPQRSEEPLPEHDFEM. A compositionally biased stretch (basic and acidic residues) spans 450–461; it reads RSEEPLPEHDFE. Position 463 is a phosphoserine (S463). Residues 749 to 763 show a composition bias toward polar residues; sequence ANVTSRTQNPSSQNT. A disordered region spans residues 749–770; that stretch reads ANVTSRTQNPSSQNTSRRRLRS. A PEHE domain is found at 798–919; it reads EILTPRWRKV…DGQEDKSLRW (122 aa). Position 863 is an N6-acetyllysine (K863).

In terms of processing, acetylated on lysine residues by KAT8 upon ionizing radiation-induced DNA damage; deacetylated by HDAC3.

This Mus musculus (Mouse) protein is KAT8 regulatory NSL complex subunit 1-like protein (Kansl1l).